The following is a 144-amino-acid chain: Hemoglobin subunit alpha-1 (144 aa).

S1 carries the N-acetylserine modification. A Globin domain is found at S1 to R144. An O2-binding site is contributed by H61. H90 provides a ligand contact to heme b.

It belongs to the globin family. As to quaternary structure, heterotetramer of two alpha chains and two beta chains. In terms of tissue distribution, red blood cells.

Functionally, involved in oxygen transport from gills to the various peripheral tissues. The protein is Hemoglobin subunit alpha-1 (hba1) of Oncorhynchus mykiss (Rainbow trout).